A 370-amino-acid polypeptide reads, in one-letter code: Quinolinate synthase (370 aa).

Residues histidine 62 and serine 83 each contribute to the iminosuccinate site. Cysteine 128 contributes to the [4Fe-4S] cluster binding site. Iminosuccinate is bound by residues 154 to 156 and serine 171; that span reads YAN. Cysteine 215 lines the [4Fe-4S] cluster pocket. Iminosuccinate contacts are provided by residues 241–243 and threonine 258; that span reads HPE. Cysteine 312 lines the [4Fe-4S] cluster pocket.

Belongs to the quinolinate synthase family. Type 1 subfamily. It depends on [4Fe-4S] cluster as a cofactor.

It is found in the cytoplasm. It carries out the reaction iminosuccinate + dihydroxyacetone phosphate = quinolinate + phosphate + 2 H2O + H(+). It functions in the pathway cofactor biosynthesis; NAD(+) biosynthesis; quinolinate from iminoaspartate: step 1/1. In terms of biological role, catalyzes the condensation of iminoaspartate with dihydroxyacetone phosphate to form quinolinate. This Neisseria meningitidis serogroup B (strain ATCC BAA-335 / MC58) protein is Quinolinate synthase.